Here is a 163-residue protein sequence, read N- to C-terminus: Jun dimerization protein 2 (163 aa).

2 disordered regions span residues 1-20 and 59-89; these read MMPG…PGLG and KRPQ…AARC. Residue Lys-65 forms a Glycyl lysine isopeptide (Lys-Gly) (interchain with G-Cter in SUMO2) linkage. The bZIP domain maps to 72–135; that stretch reads EERRKRRREK…QQLILMLNRH (64 aa). Positions 74–96 are basic motif; sequence RRKRRREKNKVAAARCRNKKKER. The tract at residues 100-128 is leucine-zipper; it reads LQRESERLELMNAELKTQIEELKLERQQL. Thr-148 is subject to Phosphothreonine; by MAPK8.

Belongs to the bZIP family. ATF subfamily. In terms of assembly, forms a homodimer or heterodimer with JUN, JUNB, JUND, CEBPG and ATF2 thereby inhibiting transactivation by JUN, ATF2 and CEBPG. Binds multiple DNA elements such as cAMP-response element (CRE) and TPA response element (TRE) either as homodimer or heterodimer. Interacts with IRF2BP1. Phosphorylation of Thr-148 by MAPK8 in response to different stress conditions such as, UV irradiation, oxidatives stress and anisomycin treatments. Post-translationally, polyubiquitinated; probably by IRF2BP1. As to expression, ubiquitously expressed in all adult tissues tested as well in embryos.

It is found in the nucleus. Its function is as follows. Component of the AP-1 transcription factor that represses transactivation mediated by the Jun family of proteins. Involved in a variety of transcriptional responses associated with AP-1, such as UV-induced apoptosis, cell differentiation, tumorigenesis and antitumogeneris. Can also function as a repressor by recruiting histone deacetylase 3/HDAC3 to the promoter region of JUN. May control transcription via direct regulation of the modification of histones and the assembly of chromatin. This chain is Jun dimerization protein 2 (Jdp2), found in Mus musculus (Mouse).